A 795-amino-acid chain; its full sequence is Phenylalanine--tRNA ligase beta subunit (795 aa).

A tRNA-binding domain is found at 39 to 148; sequence AGAFHGVVVG…ADAPLGTDIR (110 aa). Positions 401-476 constitute a B5 domain; it reads PARATIALRR…RVYGYNNIPN (76 aa). Mg(2+) contacts are provided by Asp454, Asp460, Glu463, and Glu464. Positions 701 to 794 constitute an FDX-ACB domain; that stretch reads SRFPANRRDI…LKQRFQASLR (94 aa).

The protein belongs to the phenylalanyl-tRNA synthetase beta subunit family. Type 1 subfamily. In terms of assembly, tetramer of two alpha and two beta subunits. Mg(2+) is required as a cofactor.

The protein localises to the cytoplasm. It carries out the reaction tRNA(Phe) + L-phenylalanine + ATP = L-phenylalanyl-tRNA(Phe) + AMP + diphosphate + H(+). This chain is Phenylalanine--tRNA ligase beta subunit (pheT), found in Dickeya dadantii (strain 3937) (Erwinia chrysanthemi (strain 3937)).